A 333-amino-acid chain; its full sequence is UDP-3-O-acylglucosamine N-acyltransferase 2 (333 aa).

H243 functions as the Proton acceptor in the catalytic mechanism.

The protein belongs to the transferase hexapeptide repeat family. LpxD subfamily. As to quaternary structure, homotrimer.

The enzyme catalyses a UDP-3-O-[(3R)-3-hydroxyacyl]-alpha-D-glucosamine + a (3R)-hydroxyacyl-[ACP] = a UDP-2-N,3-O-bis[(3R)-3-hydroxyacyl]-alpha-D-glucosamine + holo-[ACP] + H(+). It participates in bacterial outer membrane biogenesis; LPS lipid A biosynthesis. In terms of biological role, catalyzes the N-acylation of UDP-3-O-acylglucosamine using 3-hydroxyacyl-ACP as the acyl donor. Is involved in the biosynthesis of lipid A, a phosphorylated glycolipid that anchors the lipopolysaccharide to the outer membrane of the cell. This is UDP-3-O-acylglucosamine N-acyltransferase 2 from Koribacter versatilis (strain Ellin345).